Here is a 256-residue protein sequence, read N- to C-terminus: Receptor expression-enhancing protein 3 (256 aa).

Transmembrane regions (helical) follow at residues 1–21, 42–62, and 68–88; these read MVSW…YPAY, WIVF…IAWF, and IKIA…SVIY. Residues 177 to 256 form a disordered region; that stretch reads IMDQPDGAEY…NATTYSNMES (80 aa). Positions 247–256 are enriched in polar residues; that stretch reads NATTYSNMES.

This sequence belongs to the DP1 family.

It is found in the endoplasmic reticulum membrane. Microtubule-binding protein required to ensure proper cell division and nuclear envelope reassembly by sequestering the endoplasmic reticulum away from chromosomes during mitosis. Probably acts by clearing the endoplasmic reticulum membrane from metaphase chromosomes. The polypeptide is Receptor expression-enhancing protein 3 (reep3) (Danio rerio (Zebrafish)).